The chain runs to 60 residues: Large ribosomal subunit protein uL30 (60 aa).

Belongs to the universal ribosomal protein uL30 family. In terms of assembly, part of the 50S ribosomal subunit.

This is Large ribosomal subunit protein uL30 from Leptothrix cholodnii (strain ATCC 51168 / LMG 8142 / SP-6) (Leptothrix discophora (strain SP-6)).